A 491-amino-acid polypeptide reads, in one-letter code: Probable G-protein coupled receptor Mth-like 7 (491 aa).

The first 22 residues, 1–22 (MRLPWVIFCTVLLLIFTNNSNA), serve as a signal peptide directing secretion. N-linked (GlcNAc...) asparagine glycans are attached at residues asparagine 18 and asparagine 42. At 23–167 (DIPGCNYYDT…EEVSIQIFNK (145 aa)) the chain is on the extracellular side. Disulfide bonds link cysteine 27/cysteine 80, cysteine 82/cysteine 87, and cysteine 92/cysteine 103. A helical membrane pass occupies residues 168–188 (CGLIVWFQDGKFWVTVDLFME). At 189-222 (KQDYCLYRHNFDSDFPKSMWIIRHRCTSHISPGS) the chain is on the cytoplasmic side. A helical transmembrane segment spans residues 223–243 (LEILIITMICFVLTIAVYLYI). The Extracellular portion of the chain corresponds to 244–252 (KKLRNVTGK). A glycan (N-linked (GlcNAc...) asparagine) is linked at asparagine 248. Residues 253 to 273 (CIVCCIVSRFIQCLIMILDHL) form a helical membrane-spanning segment. Residues 274-325 (NLLNGICSPAGYSSHFFRMASNLWLSVISYHTWKVLTSLNRVDPNYRFLRYN) lie on the Cytoplasmic side of the membrane. A helical membrane pass occupies residues 326–346 (AFVWSTAAIMTGSIYIVNQIW). Over 347 to 372 (ENDPSKWNWLPLVGFIRCSVKDWHPS) the chain is Extracellular. A helical membrane pass occupies residues 373-393 (VWIYISGPSLALSTFNVAMFA). The Cytoplasmic segment spans residues 394 to 434 (LTAIYIRKVKGGINKFTNEEEGRINCINFDSQTYLQFLRLS). A helical transmembrane segment spans residues 435 to 455 (IVMGLTWIFNVIPYSARLHIF). The Extracellular portion of the chain corresponds to 456–458 (WEW). Residues 459–479 (VGIISEYFHSAFGIVLFVLLV) traverse the membrane as a helical segment. The Cytoplasmic portion of the chain corresponds to 480 to 491 (LKRSTWTLMMDS).

This sequence belongs to the G-protein coupled receptor 2 family. Mth subfamily.

The protein localises to the cell membrane. The sequence is that of Probable G-protein coupled receptor Mth-like 7 (mthl7) from Drosophila melanogaster (Fruit fly).